A 287-amino-acid chain; its full sequence is GTPase Era (287 aa).

The Era-type G domain occupies 11–174; sequence RSGFVAVIGR…RSYLASSLPE (164 aa). GTP-binding positions include 19–26 and 66–70; these read GRTNVGKS and DTPGI. A KH type-2 domain is found at 205 to 273; it reads LRDELPQALA…PLTLRVKVQR (69 aa).

Belongs to the TRAFAC class TrmE-Era-EngA-EngB-Septin-like GTPase superfamily. Era GTPase family. In terms of assembly, monomer.

Its subcellular location is the cytoplasm. It localises to the cell membrane. In terms of biological role, an essential GTPase that binds both GDP and GTP, with rapid nucleotide exchange. Plays a role in 16S rRNA processing and 30S ribosomal subunit biogenesis and possibly also in cell cycle regulation and energy metabolism. The protein is GTPase Era of Acidimicrobium ferrooxidans (strain DSM 10331 / JCM 15462 / NBRC 103882 / ICP).